Here is a 337-residue protein sequence, read N- to C-terminus: D-alanine--D-alanine ligase (337 aa).

In terms of domain architecture, ATP-grasp spans 124–330 (KMWFSALGIP…FTEYLSLVIN (207 aa)). An ATP-binding site is contributed by 154-209 (ALANWGSIFIKAASQGSSVGCYKVDDSSKVAQVLKDAFGYAPYVVVEKTIKARELE). 3 residues coordinate Mg(2+): D284, E297, and N299.

The protein belongs to the D-alanine--D-alanine ligase family. Mg(2+) is required as a cofactor. Mn(2+) serves as cofactor.

The protein resides in the cytoplasm. The catalysed reaction is 2 D-alanine + ATP = D-alanyl-D-alanine + ADP + phosphate + H(+). It functions in the pathway cell wall biogenesis; peptidoglycan biosynthesis. Functionally, cell wall formation. In Shewanella sp. (strain W3-18-1), this protein is D-alanine--D-alanine ligase.